We begin with the raw amino-acid sequence, 364 residues long: MTSELDIFVGNTTLIDEDVYRLWLDGYSVTDAVALRVRSGILEQTGATAAVLQSDTMDHYRTFHMLERLLHAPPKLLHQLIFQIPPSRQALLIERYYAFDEAFVREVLGKKLSKGTKKDLDDISTKTGITLKSCRRQFDNFKRVFKVVEEMRGSLVDNIQQHFLLSDRLARDYAAIVFFANNRFETGKKKLQYLSFGDFAFCAELMIQNWTLGAVGEAPTDPDSQMDDMDMDLDKEFLQDLKELKVLVADKDLLDLHKSLVCTALRGKLGVFSEMEANFKNLSRGLVNVAAKLTHNKDVRDLFVDLVEKFVEPCRSDHWPLSDVRFFLNQYSASVHSLDGFRHQALWDRYMGTLRGCLLRLYHD.

An N-acetylthreonine modification is found at T2.

As to quaternary structure, binds to internalized FGF1; this interaction is increased in the presence of CSNKB, suggesting a possible cooperative interaction between CSNKB and FIBP in binding to FGF1. As to expression, highly expressed in heart, skeletal muscle and pancreas. Expressed at lower levels in brain. Also found in placenta, liver and kidney.

The protein localises to the nucleus. It is found in the endomembrane system. Functionally, may be involved in mitogenic function of FGF1. May mediate with IER2 FGF-signaling in the establishment of laterality in the embryo. This chain is Acidic fibroblast growth factor intracellular-binding protein (FIBP), found in Homo sapiens (Human).